The sequence spans 297 residues: MKGILGQKIGMTQIYTAQGNKVPVTVIEVKPNVVTHKFENTKDGYVALQLGAFDQKERKFKKPEIGHFKKSNTTPKRFVKEIRNMDGYNLGDLVKADIFKSGELVDVTGISKGKGFAGTIKRHNQKIGPKSHGGGGGSKPVRQTGSIGDIAGNKVLKGMTMPGHLGNVQRTIQNLEVVKVDIKNNILLVKGSVPGPKNCFLIIKSAIKNLPSREAIELVNIKEAILKNQLLESAKKYGAEVSVDMKIHEMEEIIHAAMKEKEKLEQEAKQNAEKSNSDDDVRKEAEKLNKNKEDKGE.

Disordered regions lie at residues 124–143 (NQKIGPKSHGGGGGSKPVRQ) and 258–297 (MKEKEKLEQEAKQNAEKSNSDDDVRKEAEKLNKNKEDKGE).

The protein belongs to the universal ribosomal protein uL3 family. As to quaternary structure, part of the 50S ribosomal subunit. Forms a cluster with proteins L14 and L19.

In terms of biological role, one of the primary rRNA binding proteins, it binds directly near the 3'-end of the 23S rRNA, where it nucleates assembly of the 50S subunit. The sequence is that of Large ribosomal subunit protein uL3 from Mycoplasma mobile (strain ATCC 43663 / 163K / NCTC 11711) (Mesomycoplasma mobile).